A 277-amino-acid polypeptide reads, in one-letter code: Outer plastidial membrane protein porin (277 aa).

Belongs to the eukaryotic mitochondrial porin (TC 1.B.8.1) family.

Its subcellular location is the plastid outer membrane. Forms a channel through the cell membrane that allows diffusion of small hydrophilic molecules. The channel adopts an open conformation at low or zero membrane potential and a closed conformation at potentials above 30-40 mV. The open state has a weak anion selectivity whereas the closed state is cation-selective. The polypeptide is Outer plastidial membrane protein porin (POR1) (Zea mays (Maize)).